We begin with the raw amino-acid sequence, 231 residues long: Cytochrome c oxidase subunit 2 (231 aa).

Topologically, residues 1 to 30 (MNNFFQGYNLLFQHSLFASYMDWFHSFNCS) are mitochondrial intermembrane. A helical membrane pass occupies residues 31–52 (LLLGVLVFVTLLFGYLIFGTFY). The Mitochondrial matrix portion of the chain corresponds to 53–69 (FKSKKIEYQFGELLCSI). Residues 70-89 (FPTIILLMQMVPSLSLLYYY) traverse the membrane as a helical segment. Residues 90 to 231 (GLMNLDSNLT…FKSWCFGTME (142 aa)) lie on the Mitochondrial intermembrane side of the membrane. 6 residues coordinate Cu cation: H164, C199, E201, C203, H207, and M210. Residue E201 coordinates Mg(2+).

Belongs to the cytochrome c oxidase subunit 2 family. As to quaternary structure, component of the cytochrome c oxidase (complex IV, CIV), a multisubunit enzyme composed of a catalytic core of 3 subunits and several supernumerary subunits. The complex exists as a monomer or a dimer and forms supercomplexes (SCs) in the inner mitochondrial membrane with ubiquinol-cytochrome c oxidoreductase (cytochrome b-c1 complex, complex III, CIII). It depends on Cu cation as a cofactor.

The protein localises to the mitochondrion inner membrane. It carries out the reaction 4 Fe(II)-[cytochrome c] + O2 + 8 H(+)(in) = 4 Fe(III)-[cytochrome c] + 2 H2O + 4 H(+)(out). Functionally, component of the cytochrome c oxidase, the last enzyme in the mitochondrial electron transport chain which drives oxidative phosphorylation. The respiratory chain contains 3 multisubunit complexes succinate dehydrogenase (complex II, CII), ubiquinol-cytochrome c oxidoreductase (cytochrome b-c1 complex, complex III, CIII) and cytochrome c oxidase (complex IV, CIV), that cooperate to transfer electrons derived from NADH and succinate to molecular oxygen, creating an electrochemical gradient over the inner membrane that drives transmembrane transport and the ATP synthase. Cytochrome c oxidase is the component of the respiratory chain that catalyzes the reduction of oxygen to water. Electrons originating from reduced cytochrome c in the intermembrane space (IMS) are transferred via the dinuclear copper A center (CU(A)) of subunit 2 and heme A of subunit 1 to the active site in subunit 1, a binuclear center (BNC) formed by heme A3 and copper B (CU(B)). The BNC reduces molecular oxygen to 2 water molecules using 4 electrons from cytochrome c in the IMS and 4 protons from the mitochondrial matrix. This is Cytochrome c oxidase subunit 2 from Caenorhabditis elegans.